Reading from the N-terminus, the 124-residue chain is Small ribosomal subunit protein uS12 (124 aa).

3-methylthioaspartic acid is present on D89.

It belongs to the universal ribosomal protein uS12 family. In terms of assembly, part of the 30S ribosomal subunit. Contacts proteins S8 and S17. May interact with IF1 in the 30S initiation complex.

Functionally, with S4 and S5 plays an important role in translational accuracy. In terms of biological role, interacts with and stabilizes bases of the 16S rRNA that are involved in tRNA selection in the A site and with the mRNA backbone. Located at the interface of the 30S and 50S subunits, it traverses the body of the 30S subunit contacting proteins on the other side and probably holding the rRNA structure together. The combined cluster of proteins S8, S12 and S17 appears to hold together the shoulder and platform of the 30S subunit. The chain is Small ribosomal subunit protein uS12 from Shewanella halifaxensis (strain HAW-EB4).